Consider the following 1023-residue polypeptide: StAR-related lipid transfer protein 8 (1023 aa).

Disordered stretches follow at residues 46–67 and 82–161; these read PMGSSDLLAPPSPGLPATSSCE and TVSL…KVSK. Polar residues predominate over residues 99 to 114; the sequence is PSSSDRPLLSPTQGQE. S108 carries the post-translational modification Phosphoserine. Over residues 120-130 the composition is skewed to basic residues; it reads AKKRHRNRSFL. Over residues 143–161 the composition is skewed to polar residues; that stretch reads GSQQAEPKHSPATSEKVSK. Residue R169 is modified to Asymmetric dimethylarginine. Residues S235 and S238 each carry the phosphoserine modification. Residues 387–397 are compositionally biased toward low complexity; sequence PAQAPAEAEPV. 2 disordered regions span residues 387-461 and 467-486; these read PAQA…MNEA and LAGLQASMPRERRDSGVGAS. Positions 441 to 459 are enriched in polar residues; sequence ISDTVASSSELDSSGNSMN. Residues S498 and S506 each carry the phosphoserine modification. The Rho-GAP domain maps to 573 to 777; the sequence is PPLIHVQRTG…HMISDCKKLF (205 aa). The interval 733–757 is disordered; it reads KKDSPSPRIKSKRSLIGRPGPRDLS. Positions 809–1017 constitute an START domain; it reads AQAAGVSLSL…RDSFPTLQAA (209 aa).

In terms of assembly, binds both the SH2 and PTB domains of TNS1. As to expression, widely expressed with highest levels in kidney, lung and placenta.

Its subcellular location is the cell junction. The protein resides in the focal adhesion. Functionally, accelerates GTPase activity of RHOA and CDC42, but not RAC1. Stimulates the hydrolysis of phosphatidylinositol 4,5-bisphosphate by PLCD1. In Homo sapiens (Human), this protein is StAR-related lipid transfer protein 8 (STARD8).